Consider the following 275-residue polypeptide: Large ribosomal subunit protein uL2 (275 aa).

Residues 38 to 53 (NSKAGRNNNGRITTRH) show a composition bias toward polar residues. Disordered stretches follow at residues 38-59 (NSKA…GGHK) and 224-257 (AMNP…KGFR).

Belongs to the universal ribosomal protein uL2 family. In terms of assembly, part of the 50S ribosomal subunit. Forms a bridge to the 30S subunit in the 70S ribosome.

In terms of biological role, one of the primary rRNA binding proteins. Required for association of the 30S and 50S subunits to form the 70S ribosome, for tRNA binding and peptide bond formation. It has been suggested to have peptidyltransferase activity; this is somewhat controversial. Makes several contacts with the 16S rRNA in the 70S ribosome. In Burkholderia thailandensis (strain ATCC 700388 / DSM 13276 / CCUG 48851 / CIP 106301 / E264), this protein is Large ribosomal subunit protein uL2.